The sequence spans 29 residues: Cytochrome b6-f complex subunit 8 (29 aa).

The helical transmembrane segment at 3–23 (IVSLAWAGLMVVFTFSLSLVV) threads the bilayer.

It belongs to the PetN family. The 4 large subunits of the cytochrome b6-f complex are cytochrome b6, subunit IV (17 kDa polypeptide, PetD), cytochrome f and the Rieske protein, while the 4 small subunits are PetG, PetL, PetM and PetN. The complex functions as a dimer.

It is found in the plastid. The protein localises to the chloroplast thylakoid membrane. In terms of biological role, component of the cytochrome b6-f complex, which mediates electron transfer between photosystem II (PSII) and photosystem I (PSI), cyclic electron flow around PSI, and state transitions. The sequence is that of Cytochrome b6-f complex subunit 8 from Arabis hirsuta (Hairy rock-cress).